Reading from the N-terminus, the 97-residue chain is Small ribosomal subunit protein bS20 (97 aa).

This sequence belongs to the bacterial ribosomal protein bS20 family.

Functionally, binds directly to 16S ribosomal RNA. The sequence is that of Small ribosomal subunit protein bS20 from Gloeothece citriformis (strain PCC 7424) (Cyanothece sp. (strain PCC 7424)).